Consider the following 1024-residue polypeptide: Zn(2)-C6 fungal-type transcription factor FTF1a (1024 aa).

The segment at residues 137–164 is a DNA-binding region (zn(2)-C6 fungal-type); it reads CIACRRKKVRCSGEKPACKHCLHSHIPC.

The protein localises to the nucleus. In terms of biological role, zn(2)-C6 fungal-type transcription factor that has a role in the establishment of the fungus within the plant and/or the progress of the disease. Regulates the expression of virulence factors such as SIX1 and SIX6. This chain is Zn(2)-C6 fungal-type transcription factor FTF1a, found in Fusarium oxysporum f. sp. lycopersici (strain 4287 / CBS 123668 / FGSC 9935 / NRRL 34936) (Fusarium vascular wilt of tomato).